Consider the following 538-residue polypeptide: Acetylcholine receptor subunit alpha-type acr-7 (538 aa).

The signal sequence occupies residues 1–27 (MMVQSIQIVLPVALFFLIVFNGFTVEG). Residues 28–250 (SKKEAQLYRD…LHLRRRTFYY (223 aa)) are Extracellular-facing. N-linked (GlcNAc...) asparagine glycosylation is found at Asn-41 and Asn-101. 2 disulfide bridges follow: Cys-160–Cys-174 and Cys-229–Cys-230. A run of 3 helical transmembrane segments spans residues 251–271 (VFNV…AFCL), 280–300 (IGLQ…LSEM), and 313–333 (VFFS…ILVL). At 334 to 513 (NIRYRQITNH…FAAQAVDRFC (180 aa)) the chain is on the cytoplasmic side. A helical membrane pass occupies residues 514-534 (LIIFTIVFIICCFIFVAIPPI).

It belongs to the ligand-gated ion channel (TC 1.A.9) family. Acetylcholine receptor (TC 1.A.9.1) subfamily. Forms a homooligomeric channel blocked by alpha-bungarotoxin. The structure is probably pentameric.

It localises to the postsynaptic cell membrane. The protein localises to the cell membrane. Its function is as follows. After binding acetylcholine, the AChR responds by an extensive change in conformation that affects all subunits and leads to opening of an ion-conducting channel across the plasma membrane. The sequence is that of Acetylcholine receptor subunit alpha-type acr-7 (acr-7) from Caenorhabditis elegans.